The primary structure comprises 152 residues: D-aminoacyl-tRNA deacylase (152 aa).

Positions 142–143 match the Gly-cisPro motif, important for rejection of L-amino acids motif; the sequence is GP.

Belongs to the DTD family. As to quaternary structure, homodimer.

It is found in the cytoplasm. It catalyses the reaction glycyl-tRNA(Ala) + H2O = tRNA(Ala) + glycine + H(+). It carries out the reaction a D-aminoacyl-tRNA + H2O = a tRNA + a D-alpha-amino acid + H(+). In terms of biological role, an aminoacyl-tRNA editing enzyme that deacylates mischarged D-aminoacyl-tRNAs. Also deacylates mischarged glycyl-tRNA(Ala), protecting cells against glycine mischarging by AlaRS. Acts via tRNA-based rather than protein-based catalysis; rejects L-amino acids rather than detecting D-amino acids in the active site. By recycling D-aminoacyl-tRNA to D-amino acids and free tRNA molecules, this enzyme counteracts the toxicity associated with the formation of D-aminoacyl-tRNA entities in vivo and helps enforce protein L-homochirality. The chain is D-aminoacyl-tRNA deacylase from Burkholderia cenocepacia (strain ATCC BAA-245 / DSM 16553 / LMG 16656 / NCTC 13227 / J2315 / CF5610) (Burkholderia cepacia (strain J2315)).